We begin with the raw amino-acid sequence, 394 residues long: Probable glycosyltransferase FCK3 (394 aa).

The protein belongs to the afumC glycosyltransferase family.

It functions in the pathway secondary metabolite biosynthesis. In terms of biological role, probable glycosyl transferase; part of the gene cluster that mediates the biosynthesis of cytokinins such as fusatin, fusatinic acids or 8-oxofusatin, known for their growth promoting and anti-senescence activities toward host plants. FCK1 is a bifunctional enzyme that performs the first steps in the biosynthesis of Fusarium cytokinins. It first condenses adenosine monophosphate (AMP) with dimethylallyl diphosphate (DMAPP) to yield isoprenyl adenosine monophosphate. It then catalyzes the removal of the phosphoribose to produce isopentenylaldehyde. The cytochrome P450 monooxygenase then converts isopentenylaldehyde to trans-zeatin. A condensation step converts trans-zeatin to fusatin which is further modified to produce fusatinic acid. The mechanism for oxidation of fusatin to fusatinic acid remains unknown. 8-oxofusatin could be produced through several pathways, via direct oxygenation of fusatin, or via the 8-oxo-pentenyladenine intermediate which itself must arise from either the prenylation of 8-oxo-AMP by FCK1 and/or oxygenation of isopentenylaldehyde. Both the FCK3 and FCK4 enzymes act downstream of the identified cytokinins to produce yet unidentified compounds. In Fusarium pseudograminearum (strain CS3096) (Wheat and barley crown-rot fungus), this protein is Probable glycosyltransferase FCK3.